We begin with the raw amino-acid sequence, 196 residues long: Crossover junction endodeoxyribonuclease RuvC (196 aa).

Residues D19, E80, and D153 contribute to the active site. 3 residues coordinate Mg(2+): D19, E80, and D153.

This sequence belongs to the RuvC family. In terms of assembly, homodimer which binds Holliday junction (HJ) DNA. The HJ becomes 2-fold symmetrical on binding to RuvC with unstacked arms; it has a different conformation from HJ DNA in complex with RuvA. In the full resolvosome a probable DNA-RuvA(4)-RuvB(12)-RuvC(2) complex forms which resolves the HJ. It depends on Mg(2+) as a cofactor.

Its subcellular location is the cytoplasm. The enzyme catalyses Endonucleolytic cleavage at a junction such as a reciprocal single-stranded crossover between two homologous DNA duplexes (Holliday junction).. Functionally, the RuvA-RuvB-RuvC complex processes Holliday junction (HJ) DNA during genetic recombination and DNA repair. Endonuclease that resolves HJ intermediates. Cleaves cruciform DNA by making single-stranded nicks across the HJ at symmetrical positions within the homologous arms, yielding a 5'-phosphate and a 3'-hydroxyl group; requires a central core of homology in the junction. The consensus cleavage sequence is 5'-(A/T)TT(C/G)-3'. Cleavage occurs on the 3'-side of the TT dinucleotide at the point of strand exchange. HJ branch migration catalyzed by RuvA-RuvB allows RuvC to scan DNA until it finds its consensus sequence, where it cleaves and resolves the cruciform DNA. The sequence is that of Crossover junction endodeoxyribonuclease RuvC from Cutibacterium acnes (strain DSM 16379 / KPA171202) (Propionibacterium acnes).